A 489-amino-acid polypeptide reads, in one-letter code: Monocarboxylate transporter 2 (489 aa).

At 1 to 21 (MPSESSVKATAAPPPFPLPPD) the chain is on the cytoplasmic side. Residues 22–42 (GGWGWVVVCASFISIGFSYAF) traverse the membrane as a helical segment. The Extracellular portion of the chain corresponds to 43–65 (PKAVTVFFNDIKDIFKTTSSQIA). Residues 66–86 (WISSIMLAVMYAGGPISSVLV) traverse the membrane as a helical segment. Topologically, residues 87–95 (NNYGSRPVV) are cytoplasmic. The helical transmembrane segment at 96-116 (IVGGLLCCTGMILASFSSSVI) threads the bilayer. Over 117 to 121 (ELYLT) the chain is Extracellular. Residues 122–142 (VGFIGGLGLAFNLQPALTIIG) traverse the membrane as a helical segment. Residues 143 to 154 (KYFYRKRPLANG) are Cytoplasmic-facing. A helical transmembrane segment spans residues 155-175 (FAMAGSPVFLSTLAPFNQFLF). At 176–179 (NSYG) the chain is on the extracellular side. A helical membrane pass occupies residues 180 to 200 (WKGSFLILGAIFLHSCVAGCL). The Cytoplasmic portion of the chain corresponds to 201–250 (MRPVGPSPRAAKSKSKVGSRQDSSTKRLSKVSTAEKINRFLDFGLFTHRG). Residues 206 to 227 (PSPRAAKSKSKVGSRQDSSTKR) form a disordered region. A helical transmembrane segment spans residues 251-271 (FLIYLSGNVVLFLGMFAPIIF). At 272–286 (LAPYAKDKGVDDYNS) the chain is on the extracellular side. A helical transmembrane segment spans residues 287–307 (AFLLSVMAFTDMFARPSVGLI). The Cytoplasmic segment spans residues 308–316 (ANTSLIRPR). The chain crosses the membrane as a helical span at residues 317-337 (IQYLFSVAIMFTGICHLLCPL). Topologically, residues 338-342 (AHSYT) are extracellular. The chain crosses the membrane as a helical span at residues 343 to 363 (ALVVYVIFFGIGFGSISSLLF). Over 364–377 (ECLMDQVGASRFSS) the chain is Cytoplasmic. A helical membrane pass occupies residues 378-398 (AVGLVTIVECCPVLFGPPLAG). Topologically, residues 399-410 (KLLDITGQYKYL) are extracellular. Residues 411–431 (YIASGIVVLSSGIYLLICNAI) form a helical membrane-spanning segment. Residues 432–489 (NYRLLEKERKREKARRKKSASQASKEMEALSRSKQDDVTVKVSNTHNPPSDRDKESSI) lie on the Cytoplasmic side of the membrane. Residues 441–489 (KREKARRKKSASQASKEMEALSRSKQDDVTVKVSNTHNPPSDRDKESSI) are disordered. 2 stretches are compositionally biased toward basic and acidic residues: residues 456-470 (KEMEALSRSKQDDVT) and 480-489 (PSDRDKESSI).

Belongs to the major facilitator superfamily. Monocarboxylate porter (TC 2.A.1.13) family. As to quaternary structure, homodimer. Interacts with GRID2IP. Interacts with EMB; interaction mediates SLC16A7 targeting to the plasma membrane. Interacts with isoform 2 of BSG. Detected in brain and kidney (at protein level).

The protein localises to the cell membrane. Its subcellular location is the basolateral cell membrane. The protein resides in the cytoplasm. The enzyme catalyses 3-methyl-2-oxobutanoate(out) + H(+)(out) = 3-methyl-2-oxobutanoate(in) + H(+)(in). It carries out the reaction (S)-lactate(in) + H(+)(in) = (S)-lactate(out) + H(+)(out). It catalyses the reaction acetoacetate(out) + H(+)(out) = acetoacetate(in) + H(+)(in). The catalysed reaction is (R)-3-hydroxybutanoate(out) + H(+)(out) = (R)-3-hydroxybutanoate(in) + H(+)(in). The enzyme catalyses 4-methyl-2-oxopentanoate(out) + H(+)(out) = 4-methyl-2-oxopentanoate(in) + H(+)(in). It carries out the reaction pyruvate(out) + H(+)(out) = pyruvate(in) + H(+)(in). It catalyses the reaction (S)-3-hydroxybutanoate(out) + H(+)(out) = (S)-3-hydroxybutanoate(in) + H(+)(in). Transport activity exhibits steep dependence on substrate concentration. Substrate concentration sensitivity of SLC16A7 arises from the strong inter-subunit cooperativity of the SLC16A7 dimer during transport. Inhibited by AR-C155858. In terms of biological role, proton-coupled monocarboxylate symporter. Catalyzes the rapid transport across the plasma membrane of monocarboxylates such as L-lactate, pyruvate and ketone bodies, acetoacetate, beta-hydroxybutyrate and acetate. Dimerization is functionally required and both subunits work cooperatively in transporting substrate. The chain is Monocarboxylate transporter 2 (Slc16a7) from Rattus norvegicus (Rat).